A 76-amino-acid chain; its full sequence is ATP synthase subunit c (76 aa).

The next 2 helical transmembrane spans lie at 7–27 (VATA…IGII) and 50–70 (FIGI…AFLI).

This sequence belongs to the ATPase C chain family. As to quaternary structure, F-type ATPases have 2 components, F(1) - the catalytic core - and F(0) - the membrane proton channel. F(1) has five subunits: alpha(3), beta(3), gamma(1), delta(1), epsilon(1). F(0) has four main subunits: a(1), b(1), b'(1) and c(10-14). The alpha and beta chains form an alternating ring which encloses part of the gamma chain. F(1) is attached to F(0) by a central stalk formed by the gamma and epsilon chains, while a peripheral stalk is formed by the delta, b and b' chains.

The protein resides in the cell membrane. F(1)F(0) ATP synthase produces ATP from ADP in the presence of a proton or sodium gradient. F-type ATPases consist of two structural domains, F(1) containing the extramembraneous catalytic core and F(0) containing the membrane proton channel, linked together by a central stalk and a peripheral stalk. During catalysis, ATP synthesis in the catalytic domain of F(1) is coupled via a rotary mechanism of the central stalk subunits to proton translocation. Functionally, key component of the F(0) channel; it plays a direct role in translocation across the membrane. A homomeric c-ring of between 10-14 subunits forms the central stalk rotor element with the F(1) delta and epsilon subunits. This chain is ATP synthase subunit c, found in Chloroflexus aurantiacus (strain ATCC 29366 / DSM 635 / J-10-fl).